The primary structure comprises 153 residues: NADPH-dependent 7-cyano-7-deazaguanine reductase (153 aa).

Cysteine 51 functions as the Thioimide intermediate in the catalytic mechanism. Residue aspartate 58 is the Proton donor of the active site. Substrate-binding positions include 73–75 and 92–93; these read VES and HE.

Belongs to the GTP cyclohydrolase I family. QueF type 1 subfamily.

It localises to the cytoplasm. It catalyses the reaction 7-aminomethyl-7-carbaguanine + 2 NADP(+) = 7-cyano-7-deazaguanine + 2 NADPH + 3 H(+). It functions in the pathway tRNA modification; tRNA-queuosine biosynthesis. Catalyzes the NADPH-dependent reduction of 7-cyano-7-deazaguanine (preQ0) to 7-aminomethyl-7-deazaguanine (preQ1). The polypeptide is NADPH-dependent 7-cyano-7-deazaguanine reductase (Granulibacter bethesdensis (strain ATCC BAA-1260 / CGDNIH1)).